The chain runs to 504 residues: Acid phosphatase A (504 aa).

Positions 1–22 are cleaved as a signal peptide; it reads MYTLLDILKGLPLLAVAAIASA. Residues asparagine 84, asparagine 112, asparagine 168, asparagine 260, asparagine 415, asparagine 450, and asparagine 474 are each glycosylated (N-linked (GlcNAc...) asparagine).

It belongs to the metallophosphoesterase superfamily. Purple acid phosphatase family. Monomer.

Its subcellular location is the secreted. The catalysed reaction is a phosphate monoester + H2O = an alcohol + phosphate. Its function is as follows. Acid phosphatase involved in the regulation of fungal phenotypic traits and virulence in C.parasitica. The chain is Acid phosphatase A from Cryphonectria parasitica (strain ATCC 38755 / EP155).